The chain runs to 386 residues: 2,3-diketo-5-methylthiopentyl-1-phosphate enolase (386 aa).

Catalysis depends on Lys-85, which acts as the Proton acceptor. Residues Lys-131, 157–160, His-248, Gly-316, and 338–339 each bind substrate; these read KDDE and GT. Residues Lys-157, Asp-159, and Glu-160 each coordinate Mg(2+). Position 157 is an N6-carboxylysine (Lys-157).

This sequence belongs to the RuBisCO large chain family. Type IV subfamily. In terms of assembly, homodimer. Mg(2+) serves as cofactor.

It carries out the reaction 5-methylsulfanyl-2,3-dioxopentyl phosphate = 2-hydroxy-5-methylsulfanyl-3-oxopent-1-enyl phosphate. It functions in the pathway amino-acid biosynthesis; L-methionine biosynthesis via salvage pathway; L-methionine from S-methyl-5-thio-alpha-D-ribose 1-phosphate: step 3/6. Catalyzes the enolization of 2,3-diketo-5-methylthiopentyl-1-phosphate (DK-MTP-1-P) into 2-hydroxy-3-keto-5-methylthiopentenyl-1-phosphate (HK-MTPenyl-1-P). The polypeptide is 2,3-diketo-5-methylthiopentyl-1-phosphate enolase (mtnW) (Microcystis aeruginosa).